The sequence spans 98 residues: Homeobox protein SMOX-4 (98 aa).

Positions 37-96 (SFRNRTAFTDYQLICLEREFSHIQYLSRIDRIHLAQNLNLTEKQVKIWFQNRRVRWRKRN) form a DNA-binding region, homeobox.

It is found in the nucleus. This is Homeobox protein SMOX-4 (SMOX-4) from Schistosoma mansoni (Blood fluke).